The following is a 539-amino-acid chain: 3-methylmercaptopropionyl-CoA ligase (539 aa).

Thr-185 contacts Mg(2+). ATP contacts are provided by His-231, Gly-303, His-324, Ala-325, and Ser-329. Glu-330 provides a ligand contact to Mg(2+). ATP-binding residues include Gln-359, Asp-417, Arg-432, and Lys-523.

Belongs to the ATP-dependent AMP-binding enzyme family. In terms of assembly, homodimer. Mg(2+) is required as a cofactor.

It carries out the reaction 3-(methylsulfanyl)propanoate + ATP + CoA = 3-(methylsulfanyl)propanoyl-CoA + AMP + diphosphate. ADP acts as a competitive inhibitor and inhibits the ligase activity. Functionally, involved in the assimilation of dimethylsulphoniopropionate (DMSP), an important compound in the fixation of carbon in marine phytoplankton. Catalyzes the ATP-dependent ligation of methylmercaptopropionate (MMPA) and CoA to yield methylmercaptopropionate-CoA (MMPA-CoA). The polypeptide is 3-methylmercaptopropionyl-CoA ligase (Ruegeria lacuscaerulensis (strain DSM 11314 / KCTC 2953 / ITI-1157) (Silicibacter lacuscaerulensis)).